Here is a 215-residue protein sequence, read N- to C-terminus: Cytochrome b6 (215 aa).

Residues 32–52 (IFYCLGGITLTCFLVQVATGF) traverse the membrane as a helical segment. Cys-35 lines the heme c pocket. 2 residues coordinate heme b: His-86 and His-100. 3 helical membrane-spanning segments follow: residues 90-110 (ASMM…TGGF), 116-136 (LTWV…VTGY), and 186-206 (LHTF…FLMI). Heme b contacts are provided by His-187 and His-202.

The protein belongs to the cytochrome b family. PetB subfamily. In terms of assembly, the 4 large subunits of the cytochrome b6-f complex are cytochrome b6, subunit IV (17 kDa polypeptide, PetD), cytochrome f and the Rieske protein, while the 4 small subunits are PetG, PetL, PetM and PetN. The complex functions as a dimer. Heme b is required as a cofactor. It depends on heme c as a cofactor.

It is found in the plastid. Its subcellular location is the chloroplast thylakoid membrane. Its function is as follows. Component of the cytochrome b6-f complex, which mediates electron transfer between photosystem II (PSII) and photosystem I (PSI), cyclic electron flow around PSI, and state transitions. The protein is Cytochrome b6 of Oenothera elata subsp. hookeri (Hooker's evening primrose).